Here is a 417-residue protein sequence, read N- to C-terminus: Probable pectate lyase 20 (417 aa).

Residues 1–25 (MAVTQILVVFASALLLSMFFTGVDS) form the signal peptide. N29 and N53 each carry an N-linked (GlcNAc...) asparagine glycan. 3 residues coordinate Ca(2+): D215, D239, and D243. R295 is an active-site residue.

This sequence belongs to the polysaccharide lyase 1 family. Requires Ca(2+) as cofactor.

It catalyses the reaction Eliminative cleavage of (1-&gt;4)-alpha-D-galacturonan to give oligosaccharides with 4-deoxy-alpha-D-galact-4-enuronosyl groups at their non-reducing ends.. The protein operates within glycan metabolism; pectin degradation; 2-dehydro-3-deoxy-D-gluconate from pectin: step 2/5. In Arabidopsis thaliana (Mouse-ear cress), this protein is Probable pectate lyase 20.